The sequence spans 32 residues: Dermatoxin-J3 (32 aa).

At Q32 the chain carries Glutamine amide.

Expressed by the skin glands.

The protein localises to the secreted. In terms of biological role, antimicrobial peptide. This is Dermatoxin-J3 from Phasmahyla jandaia (Jandaia leaf frog).